The sequence spans 111 residues: MRNITISSERALEVIKAPQISEKSTFIAEKTKQIIFYVSRDANKTEIKSAIEQIWRSQNIQVKSVQVVNVKGKKKRFGRYLGQKSDWKKAFVSLKGDREIDFTDVKLFEDK.

It belongs to the universal ribosomal protein uL23 family. Part of the 50S ribosomal subunit. Contacts protein L29, and trigger factor when it is bound to the ribosome.

One of the early assembly proteins it binds 23S rRNA. One of the proteins that surrounds the polypeptide exit tunnel on the outside of the ribosome. Forms the main docking site for trigger factor binding to the ribosome. This chain is Large ribosomal subunit protein uL23, found in Nitrosomonas europaea (strain ATCC 19718 / CIP 103999 / KCTC 2705 / NBRC 14298).